Consider the following 187-residue polypeptide: Translation initiation factor IF-3 (187 aa).

This sequence belongs to the IF-3 family. Monomer.

It is found in the cytoplasm. Its function is as follows. IF-3 binds to the 30S ribosomal subunit and shifts the equilibrium between 70S ribosomes and their 50S and 30S subunits in favor of the free subunits, thus enhancing the availability of 30S subunits on which protein synthesis initiation begins. In Leptospira biflexa serovar Patoc (strain Patoc 1 / Ames), this protein is Translation initiation factor IF-3.